The chain runs to 466 residues: Vimentin (466 aa).

Composition is skewed to low complexity over residues 1–13 (MSTRSVSSSSYRR) and 20–33 (TSSRPSSNRSYVTT). Residues 1 to 33 (MSTRSVSSSSYRRMFGGSGTSSRPSSNRSYVTT) are disordered. At Ser2 the chain carries N-acetylserine. Positions 2–95 (STRSVSSSSY…FSLADAINTE (94 aa)) are head. Phosphoserine is present on Ser5. Residue Ser7 is modified to Phosphoserine; by PKA and PKC; alternate. Ser7 carries O-linked (GlcNAc) serine; alternate glycosylation. Ser8 carries the phosphoserine modification. Phosphoserine; by PKC occurs at positions 9 and 10. Thr20 carries the post-translational modification Phosphothreonine. Phosphoserine is present on residues Ser25 and Ser26. Residue Thr33 is glycosylated (O-linked (GlcNAc) threonine). An O-linked (GlcNAc) serine; alternate glycan is attached at Ser34. Ser34 is subject to Phosphoserine; by PKC; alternate. Ser39 is modified (phosphoserine; by CaMK2, PKA, PKC and ROCK2). Position 42 is a phosphoserine; by PKC (Ser42). The residue at position 47 (Ser47) is a Phosphoserine; by PKA. Phosphoserine is present on residues Ser49 and Ser51. Position 53 is a phosphotyrosine (Tyr53). A phosphoserine mark is found at Ser55 and Ser56. Position 61 is a phosphotyrosine (Tyr61). Position 66 is a phosphoserine; by PKA and PKC (Ser66). Ser72 is subject to Phosphoserine; by AURKB and ROCK2. Residues Ser73, Ser83, and Ser87 each carry the phosphoserine modification. Residues 96-131 (FKNTRTNEKVELQELNDRFANYIDKVRFLEQQNKIL) are coil 1A. Positions 96 to 131 (FKNTRTNEKVELQELNDRFANYIDKVRFLEQQNKIL) form a coiled coil. The IF rod domain occupies 103 to 411 (EKVELQELND…KLLEGEESRI (309 aa)). Lys104 is covalently cross-linked (Glycyl lysine isopeptide (Lys-Gly) (interchain with G-Cter in SUMO2)). Tyr117 carries the post-translational modification Phosphotyrosine. 3 positions are modified to N6-acetyllysine; alternate: Lys120, Lys129, and Lys139. 2 positions are modified to N6-succinyllysine; alternate: Lys120 and Lys129. Residues Lys120, Lys129, and Lys139 each participate in a glycyl lysine isopeptide (Lys-Gly) (interchain with G-Cter in SUMO2); alternate cross-link. Residues 132–153 (LAELEQLKGQGKSRLGDLYEEE) form a linker 1 region. A Phosphoserine modification is found at Ser144. A coiled-coil region spans residues 154-245 (MRELRRQVDQ…KLHDEEIQEL (92 aa)). The tract at residues 154–245 (MRELRRQVDQ…KLHDEEIQEL (92 aa)) is coil 1B. N6-acetyllysine is present on Lys168. Residue Lys188 is modified to N6-acetyllysine; alternate. Position 188 is an N6-succinyllysine; alternate (Lys188). Phosphoserine is present on Ser214. Lys223 carries the post-translational modification N6-acetyllysine; alternate. Residue Lys223 forms a Glycyl lysine isopeptide (Lys-Gly) (interchain with G-Cter in SUMO2); alternate linkage. At Ser226 the chain carries Phosphoserine. An N6-acetyllysine modification is found at Lys235. The interval 246 to 268 (QAQIQEQHVQIDVDVSKPDLTAA) is linker 12. Lys262 participates in a covalent cross-link: Glycyl lysine isopeptide (Lys-Gly) (interchain with G-Cter in SUMO2). Residues 269–407 (LRDVRQQYES…ATYRKLLEGE (139 aa)) form a coil 2 region. The residue at position 294 (Lys294) is an N6-acetyllysine; alternate. N6-succinyllysine; alternate is present on Lys294. A Glycyl lysine isopeptide (Lys-Gly) (interchain with G-Cter in SUMO2); alternate cross-link involves residue Lys294. Position 299 is a phosphoserine (Ser299). The stretch at 303–407 (NRNNDALRQA…ATYRKLLEGE (105 aa)) forms a coiled coil. A Glycyl lysine isopeptide (Lys-Gly) (interchain with G-Cter in SUMO2) cross-link involves residue Lys313. A Phosphoserine modification is found at Ser325. The [IL]-x-C-x-x-[DE] motif signature appears at 326 to 329 (LTCE). Lys373 carries the N6-acetyllysine; alternate modification. Residue Lys373 forms a Glycyl lysine isopeptide (Lys-Gly) (interchain with G-Cter in SUMO2); alternate linkage. The segment at 408 to 466 (ESRISLPLPNFSSLNLRETNLESLPLVDTHSKRTLLIKTVETRDGQVINETSQHHDDLE) is tail. A phosphoserine mark is found at Ser409, Ser412, Ser419, and Ser420. Thr426 carries the phosphothreonine modification. Ser430 is subject to Phosphoserine. Phosphothreonine is present on Thr436. Ser438 bears the Phosphoserine mark. Lys439 participates in a covalent cross-link: Glycyl lysine isopeptide (Lys-Gly) (interchain with G-Cter in SUMO2). At Lys445 the chain carries N6-acetyllysine; alternate. At Lys445 the chain carries N6-succinyllysine; alternate. Lys445 is covalently cross-linked (Glycyl lysine isopeptide (Lys-Gly) (interchain with G-Cter in SUMO2); alternate). Lys445 is covalently cross-linked (Glycyl lysine isopeptide (Lys-Gly) (interchain with G-Cter in SUMO1); alternate). 2 positions are modified to phosphothreonine: Thr446 and Thr458. Residue Ser459 is modified to Phosphoserine.

It belongs to the intermediate filament family. In terms of assembly, homomer assembled from elementary dimers. Identified in complexes that contain VIM, EZR, AHNAK, BFSP1, BFSP2, ANK2, PLEC, PRX and spectrin. Interacts with BCAS3. Interacts with LGSN. Interacts with SYNM. Interacts (via rod region) with PLEC (via CH 1 domain). Interacts with STK33. Interacts with LARP6. Interacts with RAB8B. Interacts with TOR1A; the interaction associates TOR1A with the cytoskeleton. Interacts with TOR1AIP1. Interacts with TOR1AIP1. Interacts with DIAPH1. Interacts with EPPK1; interaction is dependent of higher-order structure of intermediate filament. Interacts with the non-receptor tyrosine kinase SRMS; the interaction leads to phosphorylation of VIM. Interacts with NOD2. Interacts (via head region) with CORO1C. Interacts with HDGF. Interacts with PRKCE (via phorbol-ester/DAG-type 2 domain). Interacts with BFSP2. Interacts with PPL. Interacts with PKP1 and PKP2. Interacts with SCRIB (via PDZ domains); the interaction protects SCRIB from proteasomal degradation and facilitates SCRIB localization to intermediate filaments, the interaction is reduced by cell contact inhibition. In terms of processing, one of the most prominent phosphoproteins in various cells of mesenchymal origin. Phosphorylation is enhanced during cell division, at which time vimentin filaments are significantly reorganized. Phosphorylation by PKN1 inhibits the formation of filaments. Filament disassembly during mitosis is promoted by phosphorylation at Ser-55 as well as by nestin. Phosphorylated at Ser-56 by CDK5 during neutrophil secretion in the cytoplasm. Phosphorylated by STK33. Phosphorylated on tyrosine residues by SRMS. Post-translationally, S-nitrosylation is induced by interferon-gamma and oxidatively-modified low-densitity lipoprotein (LDL(ox)) possibly implicating the iNOS-S100A8/9 transnitrosylase complex.

The protein resides in the cytoplasm. Its subcellular location is the cytoskeleton. It is found in the nucleus matrix. It localises to the cell membrane. Vimentins are class-III intermediate filaments found in various non-epithelial cells, especially mesenchymal cells. Vimentin is attached to the nucleus, endoplasmic reticulum, and mitochondria, either laterally or terminally. Plays a role in cell directional movement, orientation, cell sheet organization and Golgi complex polarization at the cell migration front. Protects SCRIB from proteasomal degradation and facilitates its localization to intermediate filaments in a cell contact-mediated manner. Functionally, involved with LARP6 in the stabilization of type I collagen mRNAs for CO1A1 and CO1A2. This Rattus norvegicus (Rat) protein is Vimentin.